The following is a 150-amino-acid chain: Cytochrome c oxidase subunit 5A, mitochondrial (150 aa).

The N-terminal 41 residues, 1–41 (MLGAALRRCAVAATTRAGPRGLLHSARTPGPAAAIQSVRCX), are a transit peptide targeting the mitochondrion. The SIFI-degron motif lies at 2-17 (LGAALRRCAVAATTRA). N6-acetyllysine occurs at positions 87 and 113. T141 is modified (phosphothreonine).

This sequence belongs to the cytochrome c oxidase subunit 5A family. In terms of assembly, component of the cytochrome c oxidase (complex IV, CIV), a multisubunit enzyme composed of 14 subunits. The complex is composed of a catalytic core of 3 subunits MT-CO1, MT-CO2 and MT-CO3, encoded in the mitochondrial DNA, and 11 supernumerary subunits COX4I, COX5A, COX5B, COX6A, COX6B, COX6C, COX7A, COX7B, COX7C, COX8 and NDUFA4, which are encoded in the nuclear genome. The complex exists as a monomer or a dimer and forms supercomplexes (SCs) in the inner mitochondrial membrane with NADH-ubiquinone oxidoreductase (complex I, CI) and ubiquinol-cytochrome c oxidoreductase (cytochrome b-c1 complex, complex III, CIII), resulting in different assemblies (supercomplex SCI(1)III(2)IV(1) and megacomplex MCI(2)III(2)IV(2)). Interacts with AFG1L. Interacts with RAB5IF. Post-translationally, in response to mitochondrial stress, the precursor protein is ubiquitinated by the SIFI complex in the cytoplasm before mitochondrial import, leading to its degradation. Within the SIFI complex, UBR4 initiates ubiquitin chain that are further elongated or branched by KCMF1.

Its subcellular location is the mitochondrion inner membrane. It participates in energy metabolism; oxidative phosphorylation. Its function is as follows. Component of the cytochrome c oxidase, the last enzyme in the mitochondrial electron transport chain which drives oxidative phosphorylation. The respiratory chain contains 3 multisubunit complexes succinate dehydrogenase (complex II, CII), ubiquinol-cytochrome c oxidoreductase (cytochrome b-c1 complex, complex III, CIII) and cytochrome c oxidase (complex IV, CIV), that cooperate to transfer electrons derived from NADH and succinate to molecular oxygen, creating an electrochemical gradient over the inner membrane that drives transmembrane transport and the ATP synthase. Cytochrome c oxidase is the component of the respiratory chain that catalyzes the reduction of oxygen to water. Electrons originating from reduced cytochrome c in the intermembrane space (IMS) are transferred via the dinuclear copper A center (CU(A)) of subunit 2 and heme A of subunit 1 to the active site in subunit 1, a binuclear center (BNC) formed by heme A3 and copper B (CU(B)). The BNC reduces molecular oxygen to 2 water molecules using 4 electrons from cytochrome c in the IMS and 4 protons from the mitochondrial matrix. This Pan paniscus (Pygmy chimpanzee) protein is Cytochrome c oxidase subunit 5A, mitochondrial (COX5A).